Here is a 423-residue protein sequence, read N- to C-terminus: tRNA(Ile)-lysidine synthase (423 aa).

43–48 serves as a coordination point for ATP; it reads SSGVDS.

The protein belongs to the tRNA(Ile)-lysidine synthase family.

The protein localises to the cytoplasm. It catalyses the reaction cytidine(34) in tRNA(Ile2) + L-lysine + ATP = lysidine(34) in tRNA(Ile2) + AMP + diphosphate + H(+). In terms of biological role, ligates lysine onto the cytidine present at position 34 of the AUA codon-specific tRNA(Ile) that contains the anticodon CAU, in an ATP-dependent manner. Cytidine is converted to lysidine, thus changing the amino acid specificity of the tRNA from methionine to isoleucine. This is tRNA(Ile)-lysidine synthase from Helicobacter hepaticus (strain ATCC 51449 / 3B1).